The chain runs to 367 residues: MAESMLSLPTPLNISIWWNMGSILGMILGLQLLTGILLSMHYSSQLEMAFSSIIHIIRDVPGGWFLRLLHANGASLFFLFMYAHIGRGLYYQSYIIHPRVWMVGVTIFLVSMATAFLGYVLPWGQMSFWGATVITNLLSAVPYFGPSMVEWVWGGFSVGHATLNRFFSLHFLLPFLISGLALLHIIFLHDKGSSNPLGNLFHLSKKPFHPYFTIKDSVGFLMVFGVLLMITFFSPSLLLDPENYISANPMVTPTHIQPEWYFLFAYAILRSIPSKLGGVVALLMSILILYFLPLSSYGKSIPVSMNIIYQVLFWILVVTFIILTWLGACEIEEPYLSLAGPLTLLYFLMFLLLGMSNNLNFNLIQLK.

A run of 4 helical transmembrane segments spans residues 20–40 (MGSI…LLSM), 64–85 (WFLR…YAHI), 101–121 (WMVG…GYVL), and 166–186 (FFSL…LHII). Positions 70 and 84 each coordinate heme b. Heme b-binding residues include His170 and His184. His189 is an a ubiquinone binding site. 4 helical membrane-spanning segments follow: residues 214-234 (IKDS…TFFS), 276-296 (LGGV…PLSS), 308-328 (IYQV…WLGA), and 335-355 (YLSL…LLGM).

The protein belongs to the cytochrome b family. As to quaternary structure, the main subunits of complex b-c1 are: cytochrome b, cytochrome c1 and the Rieske protein. The cofactor is heme b.

It localises to the mitochondrion inner membrane. Component of the ubiquinol-cytochrome c reductase complex (complex III or cytochrome b-c1 complex) that is part of the mitochondrial respiratory chain. The b-c1 complex mediates electron transfer from ubiquinol to cytochrome c. Contributes to the generation of a proton gradient across the mitochondrial membrane that is then used for ATP synthesis. The polypeptide is Cytochrome b (MT-CYB) (Albinaria caerulea (Land snail)).